The chain runs to 501 residues: Ribose import ATP-binding protein RbsA (501 aa).

2 consecutive ABC transporter domains span residues 5-241 (LQLQ…VGRK) and 252-495 (APGE…VGKQ). 37–44 (GENGAGKS) is an ATP binding site.

The protein belongs to the ABC transporter superfamily. Ribose importer (TC 3.A.1.2.1) family. As to quaternary structure, the complex is composed of an ATP-binding protein (RbsA), two transmembrane proteins (RbsC) and a solute-binding protein (RbsB).

It localises to the cell inner membrane. It catalyses the reaction D-ribose(out) + ATP + H2O = D-ribose(in) + ADP + phosphate + H(+). Functionally, part of the ABC transporter complex RbsABC involved in ribose import. Responsible for energy coupling to the transport system. In Pectobacterium atrosepticum (strain SCRI 1043 / ATCC BAA-672) (Erwinia carotovora subsp. atroseptica), this protein is Ribose import ATP-binding protein RbsA.